A 1273-amino-acid chain; its full sequence is ABC transporter B family member 2 (1273 aa).

A signal peptide spans 1 to 30; it reads MYISLIFFLSNHFPPLISIPIFIFLSFSSP. Transmembrane regions (helical) follow at residues 66–86, 91–111, 126–146, 209–229, 230–250, 305–325, and 345–365; these read FSFA…GACI, VPIF…AYLF, FVYL…CWMH, FIAG…VTLS, IVPL…GLIA, GLGL…LVWF, and LNVV…SAFV. Positions 77 to 366 constitute an ABC transmembrane type-1 1 domain; sequence MTLGSVGACI…AAPDISAFVR (290 aa). The region spanning 401–637 is the ABC transporter 1 domain; sequence IQFKDATFSY…PDGAYSSLLR (237 aa). 436 to 443 is an ATP binding site; that stretch reads GGSGSGKS. N-linked (GlcNAc...) asparagine glycans are attached at residues Asn466 and Asn651. Positions 710–997 constitute an ABC transmembrane type-1 2 domain; the sequence is GVCGTICAFI…TLALAPDLLK (288 aa). A run of 2 helical transmembrane segments spans residues 711–731 and 752–772; these read VCGT…ALGV and IAIL…IEHI. Asn806 carries an N-linked (GlcNAc...) asparagine glycan. The next 3 helical transmembrane spans lie at 832–852, 934–954, and 975–995; these read ILLQ…ILNW, IAGL…GLAL, and FMVL…APDL. In terms of domain architecture, ABC transporter 2 spans 1030 to 1266; it reads IELKGVHFSY…KSGPYFKLIS (237 aa). 1065-1072 serves as a coordination point for ATP; sequence GQSGSGKS. N-linked (GlcNAc...) asparagine glycans are attached at residues Asn1217 and Asn1256.

Belongs to the ABC transporter superfamily. ABCB family. Multidrug resistance exporter (TC 3.A.1.201) subfamily. In terms of assembly, interacts with 1-naphthylphthalamic acid (NPA).

It localises to the membrane. This Arabidopsis thaliana (Mouse-ear cress) protein is ABC transporter B family member 2 (ABCB2).